Consider the following 180-residue polypeptide: ATP-dependent protease subunit HslV (180 aa).

Threonine 6 is an active-site residue. Positions 164, 167, and 170 each coordinate Na(+).

It belongs to the peptidase T1B family. HslV subfamily. As to quaternary structure, a double ring-shaped homohexamer of HslV is capped on each side by a ring-shaped HslU homohexamer. The assembly of the HslU/HslV complex is dependent on binding of ATP.

Its subcellular location is the cytoplasm. The catalysed reaction is ATP-dependent cleavage of peptide bonds with broad specificity.. Its activity is regulated as follows. Allosterically activated by HslU binding. In terms of biological role, protease subunit of a proteasome-like degradation complex believed to be a general protein degrading machinery. The chain is ATP-dependent protease subunit HslV from Borrelia turicatae (strain 91E135).